A 1033-amino-acid chain; its full sequence is uncharacterized protein (1033 aa).

Coiled coils occupy residues 212–326 (EIFK…KMNN), 405–582 (ILNN…LYKF), 615–771 (LEKE…LKLN), and 797–1019 (KMKI…NIDN).

This is an uncharacterized protein from Plasmodium falciparum (isolate 3D7).